Consider the following 642-residue polypeptide: Threonine--tRNA ligase (642 aa).

A TGS domain is found at 1 to 61; that stretch reads MPIITLPDGS…EHDASLEIIT (61 aa). Residues 244 to 535 are catalytic; it reads DHRKIGKQLD…LIEEYAGFFP (292 aa). The Zn(2+) site is built by Cys-335, His-386, and His-512.

It belongs to the class-II aminoacyl-tRNA synthetase family. Homodimer. Zn(2+) serves as cofactor.

The protein resides in the cytoplasm. The enzyme catalyses tRNA(Thr) + L-threonine + ATP = L-threonyl-tRNA(Thr) + AMP + diphosphate + H(+). Catalyzes the attachment of threonine to tRNA(Thr) in a two-step reaction: L-threonine is first activated by ATP to form Thr-AMP and then transferred to the acceptor end of tRNA(Thr). Also edits incorrectly charged L-seryl-tRNA(Thr). This is Threonine--tRNA ligase from Vibrio cholerae serotype O1 (strain M66-2).